The primary structure comprises 219 residues: Tetratricopeptide repeat protein 9A (219 aa).

The interval Met-1–Pro-49 is disordered. Residues Ala-56 to Leu-89 form a TPR 1 repeat. The interval Glu-94 to Glu-115 is disordered. At Ser-102 the chain carries Phosphoserine. 2 TPR repeats span residues Ile-125–Asn-160 and Phe-161–Asp-194.

The protein belongs to the TTC9 family.

This Mus musculus (Mouse) protein is Tetratricopeptide repeat protein 9A (Ttc9).